A 128-amino-acid chain; its full sequence is Large ribosomal subunit protein bL19 (128 aa).

It belongs to the bacterial ribosomal protein bL19 family.

Functionally, this protein is located at the 30S-50S ribosomal subunit interface and may play a role in the structure and function of the aminoacyl-tRNA binding site. The protein is Large ribosomal subunit protein bL19 of Paracidovorax citrulli (strain AAC00-1) (Acidovorax citrulli).